A 485-amino-acid chain; its full sequence is UDP-N-acetylmuramate--L-alanine ligase (485 aa).

129–135 provides a ligand contact to ATP; the sequence is GTHGKTT.

It belongs to the MurCDEF family.

It is found in the cytoplasm. The catalysed reaction is UDP-N-acetyl-alpha-D-muramate + L-alanine + ATP = UDP-N-acetyl-alpha-D-muramoyl-L-alanine + ADP + phosphate + H(+). Its pathway is cell wall biogenesis; peptidoglycan biosynthesis. In terms of biological role, cell wall formation. The chain is UDP-N-acetylmuramate--L-alanine ligase from Vibrio campbellii (strain ATCC BAA-1116).